The chain runs to 583 residues: Kelch-like protein 38 (583 aa).

One can recognise a BTB domain in the interval 34-101; sequence TDVILCTEDK…IYTGSITITM (68 aa). Residues 136–237 form the BACK domain; that stretch reads CLSMIRLSEI…HPTYLFQFIA (102 aa). Kelch repeat units lie at residues 285 to 332, 333 to 385, 386 to 433, 435 to 481, 482 to 523, and 525 to 575; these read TLVV…CIHS, ILYV…SYLH, FIFA…ANDQ, IYVF…VIED, KIYI…VINN, and LYVT…PLIC.

This Danio rerio (Zebrafish) protein is Kelch-like protein 38 (klhl38).